The primary structure comprises 135 residues: Small ribosomal subunit protein uS12 (135 aa).

The interval 1 to 20 (MPTINQLVRKGRHSKVTKSK) is disordered. Residues 9-18 (RKGRHSKVTK) are compositionally biased toward basic residues.

Belongs to the universal ribosomal protein uS12 family. In terms of assembly, part of the 30S ribosomal subunit. Contacts proteins S8 and S17. May interact with IF1 in the 30S initiation complex.

Functionally, with S4 and S5 plays an important role in translational accuracy. Its function is as follows. Interacts with and stabilizes bases of the 16S rRNA that are involved in tRNA selection in the A site and with the mRNA backbone. Located at the interface of the 30S and 50S subunits, it traverses the body of the 30S subunit contacting proteins on the other side and probably holding the rRNA structure together. The combined cluster of proteins S8, S12 and S17 appears to hold together the shoulder and platform of the 30S subunit. This is Small ribosomal subunit protein uS12 from Lactobacillus acidophilus (strain ATCC 700396 / NCK56 / N2 / NCFM).